The following is a 383-amino-acid chain: Probable cytosolic iron-sulfur protein assembly protein 1 (383 aa).

7 WD repeats span residues 10–49, 56–108, 135–175, 182–221, 228–275, 302–341, and 349–383; these read AHND…KFPL, THKR…VEYD, GHEN…EEFE, DHSQ…DEWS, GHEG…EDDE, VHKY…KWVI, and HGVH…LWKI.

The protein belongs to the WD repeat CIA1 family. Interacts with NAR1.

It localises to the cytoplasm. The protein resides in the nucleus. In terms of biological role, essential component of the cytosolic iron-sulfur (Fe/S) protein assembly machinery. Required for the maturation of extramitochondrial Fe/S proteins. The sequence is that of Probable cytosolic iron-sulfur protein assembly protein 1 from Candida albicans (strain SC5314 / ATCC MYA-2876) (Yeast).